Reading from the N-terminus, the 521-residue chain is Cytochrome P450 monooxygenase ARMGADRAFT_1018420 (521 aa).

The helical transmembrane segment at 9 to 26 (VSPIWILTAIVVVAYTTV) threads the bilayer. Cys-443 lines the heme pocket. Asn-450 carries an N-linked (GlcNAc...) asparagine glycan.

This sequence belongs to the cytochrome P450 family. Heme serves as cofactor.

Its subcellular location is the membrane. The protein operates within secondary metabolite biosynthesis. Functionally, cytochrome P450 monooxygenase, part of the gene cluster that mediates the biosynthesis of melleolides, a range of antifungal and phytotoxic polyketide derivatives composed of an orsellinic acid (OA) moiety esterified to various sesquiterpene alcohols. The first step in melleolides biosynthesis is performed by the delta(6)-protoilludene synthase PRO1 which catalyzes the cyclization of farnesyl diphosphate to protoilludene. The orsellinic acid synthase armB produces OA by condensing acetyl-CoA with 3 malonyl-CoA units in a three-round chain elongation reaction folowed by a C2-C7 ring closure. ArmB further catalyzes the trans-esterification of OA to the various sesquiterpene alcohols resulting from the hydroxylation of protoilludene. The melleolides cluster also includes 5 cytochrome P450 monooxygenases, 4 NAD(+)-dependent oxidoreductases, one flavin-dependent oxidoreductase, and one O-methyltransferase. The cytochrome P450 monooxygenases may be involved in protoilludene hydroxylation to elaborate melleolides with multiple alcohol groups, such as melleolide D, which carries alcohol functionalities at C-4, C-5, C-10, and C-13. The role of the NAD(+)-dependent enzymes remains unknown. Numerous melleolides, including arnamial, show 5'-O-methylation of the aromatic moiety which may be catalyzed by the methyltransferase encoded in the cluster. The flavin-dependent oxidoreductase might represent the dehydrogenase yielding the aldehyde in position 1 of arnamial and other melleolides. Finally, several halogenase localized outside of the cluster, are able to catalyze the transfer of a single chlorine atom to the melleolide backbone, resulting in a 6'-chloromelleolide product. In Armillaria gallica (Bulbous honey fungus), this protein is Cytochrome P450 monooxygenase ARMGADRAFT_1018420.